The following is a 476-amino-acid chain: Glycogen synthase (476 aa).

Lys-15 serves as a coordination point for ADP-alpha-D-glucose.

This sequence belongs to the glycosyltransferase 1 family. Bacterial/plant glycogen synthase subfamily.

It catalyses the reaction [(1-&gt;4)-alpha-D-glucosyl](n) + ADP-alpha-D-glucose = [(1-&gt;4)-alpha-D-glucosyl](n+1) + ADP + H(+). The protein operates within glycan biosynthesis; glycogen biosynthesis. Functionally, synthesizes alpha-1,4-glucan chains using ADP-glucose. In Actinobacillus succinogenes (strain ATCC 55618 / DSM 22257 / CCUG 43843 / 130Z), this protein is Glycogen synthase.